The chain runs to 672 residues: DNA ligase (672 aa).

NAD(+)-binding positions include 34 to 38 (DAEYD), 83 to 84 (SL), and E117. The active-site N6-AMP-lysine intermediate is K119. Residues R140, E177, K293, and K317 each coordinate NAD(+). The Zn(2+) site is built by C411, C414, C429, and C434. A BRCT domain is found at 591-672 (RVGGRFTGKT…FLAMLGVCRT (82 aa)).

Belongs to the NAD-dependent DNA ligase family. LigA subfamily. It depends on Mg(2+) as a cofactor. The cofactor is Mn(2+).

It catalyses the reaction NAD(+) + (deoxyribonucleotide)n-3'-hydroxyl + 5'-phospho-(deoxyribonucleotide)m = (deoxyribonucleotide)n+m + AMP + beta-nicotinamide D-nucleotide.. Its function is as follows. DNA ligase that catalyzes the formation of phosphodiester linkages between 5'-phosphoryl and 3'-hydroxyl groups in double-stranded DNA using NAD as a coenzyme and as the energy source for the reaction. It is essential for DNA replication and repair of damaged DNA. In Geotalea uraniireducens (strain Rf4) (Geobacter uraniireducens), this protein is DNA ligase.